A 359-amino-acid polypeptide reads, in one-letter code: Sulfate/thiosulfate import ATP-binding protein CysA (359 aa).

The ABC transporter domain maps to 3–237 (VRVAGVRKEF…PNSPFVYGFI (235 aa)). 35 to 42 (GPSGSGKT) contacts ATP.

Belongs to the ABC transporter superfamily. Sulfate/tungstate importer (TC 3.A.1.6) family. As to quaternary structure, the complex is composed of two ATP-binding proteins (CysA), two transmembrane proteins (CysT and CysW) and a solute-binding protein (CysP).

Its subcellular location is the cell inner membrane. It catalyses the reaction sulfate(out) + ATP + H2O = sulfate(in) + ADP + phosphate + H(+). The catalysed reaction is thiosulfate(out) + ATP + H2O = thiosulfate(in) + ADP + phosphate + H(+). Part of the ABC transporter complex CysAWTP involved in sulfate/thiosulfate import. Responsible for energy coupling to the transport system. This Brucella melitensis biotype 1 (strain ATCC 23456 / CCUG 17765 / NCTC 10094 / 16M) protein is Sulfate/thiosulfate import ATP-binding protein CysA.